The sequence spans 375 residues: Cytochrome P450 monooxygenase ACRTS1 (375 aa).

Cys-321 is a binding site for heme.

The protein belongs to the cytochrome P450 family. The cofactor is heme.

It functions in the pathway mycotoxin biosynthesis. In terms of biological role, cytochrome P450 monooxygenase; part of the gene cluster that mediates the biosynthesis of the host-selective toxins (HSTs) ACR-toxins responsible for brown spot of rough lemon disease by the rough lemon pathotype. ACR-toxins cause uncoupling of mitochondrial oxidative-phosphorylation similar to that of classic protonophore. The structure of the major form of ACR-toxin (ACR-toxin I) consists of an alpha-dihydropyrone ring in a 19-carbon polyalcohol, a typical polyketide structure. Minor toxins were characterized as having a pyrone ring with polyalcohol side chains different in length and showing weaker toxicity. The highly reducing polyketide synthase ACRTS2 has all necessary enzymatic domains for multiple cycles of condensation and beta-keto processing. The cytochrome P450 monooxygenase ACRTS1 has also been shown to be essential for ACR-toxin biosynthesis, however its exact role in the pathway has not been elucidated yet. This chain is Cytochrome P450 monooxygenase ACRTS1, found in Alternaria alternata (Alternaria rot fungus).